The primary structure comprises 254 residues: Ubiquinone/menaquinone biosynthesis C-methyltransferase UbiE (254 aa).

S-adenosyl-L-methionine is bound by residues threonine 77, aspartate 98, 126–127, and serine 143; that span reads NA.

It belongs to the class I-like SAM-binding methyltransferase superfamily. MenG/UbiE family.

The enzyme catalyses a 2-demethylmenaquinol + S-adenosyl-L-methionine = a menaquinol + S-adenosyl-L-homocysteine + H(+). It carries out the reaction a 2-methoxy-6-(all-trans-polyprenyl)benzene-1,4-diol + S-adenosyl-L-methionine = a 5-methoxy-2-methyl-3-(all-trans-polyprenyl)benzene-1,4-diol + S-adenosyl-L-homocysteine + H(+). It participates in quinol/quinone metabolism; menaquinone biosynthesis; menaquinol from 1,4-dihydroxy-2-naphthoate: step 2/2. The protein operates within cofactor biosynthesis; ubiquinone biosynthesis. Its function is as follows. Methyltransferase required for the conversion of demethylmenaquinol (DMKH2) to menaquinol (MKH2) and the conversion of 2-polyprenyl-6-methoxy-1,4-benzoquinol (DDMQH2) to 2-polyprenyl-3-methyl-6-methoxy-1,4-benzoquinol (DMQH2). In Hydrogenovibrio crunogenus (strain DSM 25203 / XCL-2) (Thiomicrospira crunogena), this protein is Ubiquinone/menaquinone biosynthesis C-methyltransferase UbiE.